Reading from the N-terminus, the 135-residue chain is Small ribosomal subunit protein bS16m/bS16c (135 aa).

The N-terminal 7 residues, 1–7 (MVVRIRL), are a transit peptide targeting the chloroplast and mitochondrion. Residues 87-135 (PMVAMGRKGGARDTRPVDPMTGRYVDAENKTVNANDNQPKEEDTEAKSA) form a disordered region. The span at 124-135 (QPKEEDTEAKSA) shows a compositional bias: basic and acidic residues.

It belongs to the bacterial ribosomal protein bS16 family. Component of the mitochondrial ribosome small subunit. As to expression, expressed at low levels in flowers, and, to a lower extent, in leaves, stems and roots.

Its subcellular location is the mitochondrion. It is found in the plastid. The protein resides in the chloroplast. The protein is Small ribosomal subunit protein bS16m/bS16c of Arabidopsis thaliana (Mouse-ear cress).